We begin with the raw amino-acid sequence, 250 residues long: Agamous-like MADS-box protein AGL9 homolog (250 aa).

Residues 3–57 (RGRVELKMIENKINRQVTFAKRRKRLLKKAYELSVLCDAEVALIIFSNRGKLYEF) enclose the MADS-box domain. In terms of domain architecture, K-box spans 87 to 177 (TQSSQQEYLK…KRRFEESSQA (91 aa)).

As to expression, expressed in petals and weakly in sepals but not in the column (gynostemium).

It is found in the nucleus. Probable transcription factor active in inflorescence development and floral organogenesis. In Aranda deborah (Orchid), this protein is Agamous-like MADS-box protein AGL9 homolog.